The sequence spans 424 residues: Glutamyl-tRNA reductase (424 aa).

Substrate contacts are provided by residues 53 to 56 (TCNR), Ser111, 116 to 118 (EPQ), and Gln122. Catalysis depends on Cys54, which acts as the Nucleophile. Residue 191-196 (GAGEMI) participates in NADP(+) binding.

This sequence belongs to the glutamyl-tRNA reductase family. In terms of assembly, homodimer.

It carries out the reaction (S)-4-amino-5-oxopentanoate + tRNA(Glu) + NADP(+) = L-glutamyl-tRNA(Glu) + NADPH + H(+). Its pathway is porphyrin-containing compound metabolism; protoporphyrin-IX biosynthesis; 5-aminolevulinate from L-glutamyl-tRNA(Glu): step 1/2. Functionally, catalyzes the NADPH-dependent reduction of glutamyl-tRNA(Glu) to glutamate 1-semialdehyde (GSA). This chain is Glutamyl-tRNA reductase, found in Bordetella avium (strain 197N).